Consider the following 359-residue polypeptide: Guanine nucleotide-binding protein alpha-4 subunit (359 aa).

The N-myristoyl glycine moiety is linked to residue G2. A lipid anchor (S-palmitoyl cysteine) is attached at C3. The G-alpha domain maps to 31–359 (GEIKLLLLGA…RNNLYLCGLY (329 aa)). The G1 motif stretch occupies residues 34 to 47 (KLLLLGAGESGKST). GTP is bound by residues 39–46 (GAGESGKS), 178–184 (LRARVKS), 203–207 (DVGGQ), 272–275 (NKMD), and A331. S46 provides a ligand contact to Mg(2+). The interval 176–184 (DILRARVKS) is G2 motif. The interval 199 to 208 (FKMFDVGGQR) is G3 motif. The tract at residues 268–275 (ILFLNKMD) is G4 motif. Residues 329 to 334 (TCATDT) are G5 motif.

Belongs to the G-alpha family. G(i/o/t/z) subfamily. As to quaternary structure, g proteins are composed of 3 units; alpha, beta and gamma. The alpha chain contains the guanine nucleotide binding site. In terms of tissue distribution, expressed in ASI neurons.

Guanine nucleotide-binding proteins (G proteins) are involved as modulators or transducers in various transmembrane signaling systems. Acts in concert with npr-15 to activate TGF-beta-like daf-7 secretion in the ASI neuron, thereby promoting larval development and inhibition of dauer diapause. This is Guanine nucleotide-binding protein alpha-4 subunit (gpa-4) from Caenorhabditis elegans.